The sequence spans 304 residues: Putative ankyrin repeat protein R602 (304 aa).

6 ANK repeats span residues 82–117 (LIRY…DITF), 118–146 (NDNF…DVHA), 147–176 (DNEF…DPFC), 178–206 (DNIV…DINA), 207–236 (GNNY…SIND), and 238–266 (SPND…DIST).

The sequence is that of Putative ankyrin repeat protein R602 from Acanthamoeba polyphaga (Amoeba).